Here is a 138-residue protein sequence, read N- to C-terminus: Probable glycine cleavage system H protein 1 (138 aa).

Positions 30 to 112 constitute a Lipoyl-binding domain; sequence IATVGITDYA…YGRGWIFKLK (83 aa). Lys71 bears the N6-lipoyllysine mark.

The protein belongs to the GcvH family. The glycine cleavage system is composed of four proteins: P, T, L and H. (R)-lipoate serves as cofactor.

The glycine cleavage system catalyzes the degradation of glycine. The H protein shuttles the methylamine group of glycine from the P protein to the T protein. The chain is Probable glycine cleavage system H protein 1 from Sulfolobus acidocaldarius (strain ATCC 33909 / DSM 639 / JCM 8929 / NBRC 15157 / NCIMB 11770).